A 296-amino-acid chain; its full sequence is Ribosomal RNA small subunit methyltransferase H (296 aa).

Residues glycine 38–histidine 40, glutamate 57, phenylalanine 80, aspartate 103, and histidine 110 each bind S-adenosyl-L-methionine.

It belongs to the methyltransferase superfamily. RsmH family.

It localises to the cytoplasm. It carries out the reaction cytidine(1402) in 16S rRNA + S-adenosyl-L-methionine = N(4)-methylcytidine(1402) in 16S rRNA + S-adenosyl-L-homocysteine + H(+). In terms of biological role, specifically methylates the N4 position of cytidine in position 1402 (C1402) of 16S rRNA. This Borrelia garinii subsp. bavariensis (strain ATCC BAA-2496 / DSM 23469 / PBi) (Borreliella bavariensis) protein is Ribosomal RNA small subunit methyltransferase H.